The following is a 784-amino-acid chain: Endonuclease MutS2 (784 aa).

335-342 (GPNTGGKT) provides a ligand contact to ATP. The interval 527 to 546 (ERSKKQAEEDEARAHSAREE) is disordered. The region spanning 709–784 (LDLRGERYED…GTGVTVVELK (76 aa)) is the Smr domain.

It belongs to the DNA mismatch repair MutS family. MutS2 subfamily. Homodimer. Binds to stalled ribosomes, contacting rRNA.

Functionally, endonuclease that is involved in the suppression of homologous recombination and thus may have a key role in the control of bacterial genetic diversity. Its function is as follows. Acts as a ribosome collision sensor, splitting the ribosome into its 2 subunits. Detects stalled/collided 70S ribosomes which it binds and splits by an ATP-hydrolysis driven conformational change. Acts upstream of the ribosome quality control system (RQC), a ribosome-associated complex that mediates the extraction of incompletely synthesized nascent chains from stalled ribosomes and their subsequent degradation. Probably generates substrates for RQC. The polypeptide is Endonuclease MutS2 (Geobacillus thermodenitrificans (strain NG80-2)).